Here is a 444-residue protein sequence, read N- to C-terminus: Sprouty-related, EVH1 domain-containing protein 1 (444 aa).

Position 2 is an N-acetylserine (serine 2). One can recognise a WH1 domain in the interval 6-123; sequence ATSDNDNSYA…RGIRRAIEDI (118 aa). Residues 123–151 form a disordered region; the sequence is ISQGCPESKNEAEGADDLQANEEDSSSSL. Residues 135–147 are compositionally biased toward acidic residues; the sequence is EGADDLQANEEDS. At lysine 224 the chain carries N6-methyllysine. The 53-residue stretch at 233 to 285 folds into the KBD domain; sequence SIRHVSFQDEDEIVRINPRDILIRRYADYRHPDMWKNDLERDDADSSIQFSKP. Phosphoserine occurs at positions 238 and 308. The required for interaction with TESK1 stretch occupies residues 333-444; the sequence is SRCVYCQERF…CCGGKHKAAG (112 aa). The SPR domain occupies 334–442; the sequence is RCVYCQERFN…CGCCGGKHKA (109 aa).

In terms of assembly, homodimer and heterodimer. Able to interact with SPRED2 to form heterodimers. Interacts (via C-terminus) with TAOK1/MARKK (via C-terminus); the interaction does not affect TAOK1 kinase activity. Interacts (via C-terminus) with TESK1 (via C-terminus); the interaction inhibits TESK1 kinase activity. Interacts with CAV1. Interacts with RAS. Interacts with palmitoyltransferase ZDHHC17/HIP14; the interaction leads to palmitoylation of SPRED1. In terms of processing, palmitoylated by ZDHHC17/HIP14. Post-translationally, phosphorylated on tyrosine. Ubiquitinated. In terms of tissue distribution, weakly expressed in embryonic cell line HEK293.

It localises to the cell membrane. The protein resides in the membrane. Its subcellular location is the caveola. The protein localises to the nucleus. Its function is as follows. Tyrosine kinase substrate that inhibits growth-factor-mediated activation of MAP kinase. Negatively regulates hematopoiesis of bone marrow. Inhibits fibroblast growth factor (FGF)-induced retinal lens fiber differentiation, probably by inhibiting FGF-mediated phosphorylation of ERK1/2. Attenuates actin stress fiber formation via inhibition of TESK1-mediated phosphorylation of cofilin. Inhibits TGFB-induced epithelial-to-mesenchymal transition in lens epithelial cells. This is Sprouty-related, EVH1 domain-containing protein 1 (SPRED1) from Homo sapiens (Human).